Consider the following 352-residue polypeptide: Zinc finger CCCH domain-containing protein 42 (352 aa).

The RRM domain occupies 36 to 114 (AYVYVGGIPF…RTIKVDHCGA (79 aa)). C3H1-type zinc fingers lie at residues 130-157 (REARGVCRAFQRGECTRGDSCKFSHDEK) and 180-207 (REGRGVCRAFQRGECTRGDSCKFSHDEK). The interval 156 to 179 (EKRAANTGWGHEEDRSSKWDHDKN) is disordered. Composition is skewed to basic and acidic residues over residues 210–230 (ATTGWGHEEDRSSKWDQDKLN), 243–296 (GDFK…RSGR), and 304–352 (RHND…DRRR). Residues 210 to 352 (ATTGWGHEED…DSLRREDRRR (143 aa)) form a disordered region. The stretch at 319 to 348 (RAQDWEKRKAESRRDRNDREEKDRDSLRRE) forms a coiled coil.

In Arabidopsis thaliana (Mouse-ear cress), this protein is Zinc finger CCCH domain-containing protein 42.